Reading from the N-terminus, the 205-residue chain is Histidine biosynthesis bifunctional protein HisIE (205 aa).

The phosphoribosyl-AMP cyclohydrolase stretch occupies residues 1–115 (MIDIKELKFD…DEETEDGIEI (115 aa)). The interval 116–205 (LNKLYERIKG…YNELERRYKK (90 aa)) is phosphoribosyl-ATP pyrophosphohydrolase.

In the N-terminal section; belongs to the PRA-CH family. This sequence in the C-terminal section; belongs to the PRA-PH family.

The protein localises to the cytoplasm. It catalyses the reaction 1-(5-phospho-beta-D-ribosyl)-ATP + H2O = 1-(5-phospho-beta-D-ribosyl)-5'-AMP + diphosphate + H(+). It carries out the reaction 1-(5-phospho-beta-D-ribosyl)-5'-AMP + H2O = 1-(5-phospho-beta-D-ribosyl)-5-[(5-phospho-beta-D-ribosylamino)methylideneamino]imidazole-4-carboxamide. Its pathway is amino-acid biosynthesis; L-histidine biosynthesis; L-histidine from 5-phospho-alpha-D-ribose 1-diphosphate: step 2/9. It participates in amino-acid biosynthesis; L-histidine biosynthesis; L-histidine from 5-phospho-alpha-D-ribose 1-diphosphate: step 3/9. This Caldanaerobacter subterraneus subsp. tengcongensis (strain DSM 15242 / JCM 11007 / NBRC 100824 / MB4) (Thermoanaerobacter tengcongensis) protein is Histidine biosynthesis bifunctional protein HisIE.